The chain runs to 385 residues: MRILKSHPLLKLLNAYIIDHSQPTNINYLWNFGSLLGLCLGIQIITGVTLAMHYNPSVAEAFNSVEHIMRDVNNGWLIRYLHSNTASAFFFLVYLHIGRGFYYGSYRSPRTLAWILGVIILILMMGIGFLGYVLPYGQMSLWGATVITNLISAIPWIGQDIVEFIWGGFSVNNATLNRFFALHFVLPFVLAALVIMHLIAVHETAGASNPLGTPAYYDRIPFAPYYLFKDLITIFLFMFGLSIFVFFMPNVLGDSENYIMANPMQTPAAIVPEWYLLPFYAILRSIPNKLLGVIAMFASLVILMVLPKTDLGITKGLQFRPLSKIAFYLFVTNFLLLLQLGAKHVESPFIEFGQISTALYFAYYLIIMPGVSILENTLIDLSQKG.

Transmembrane regions (helical) follow at residues 32-52 (FGSLLGLCLGIQIITGVTLAM), 76-98 (WLIRYLHSNTASAFFFLVYLHIG), 113-133 (AWILGVIILILMMGIGFLGYV), and 179-199 (FFALHFVLPFVLAALVIMHLI). H82 and H96 together coordinate heme b. Positions 183 and 197 each coordinate heme b. H202 provides a ligand contact to a ubiquinone. 4 consecutive transmembrane segments (helical) span residues 226-246 (YLFKDLITIFLFMFGLSIFVF), 290-310 (LLGVIAMFASLVILMVLPKTD), 322-342 (LSKIAFYLFVTNFLLLLQLGA), and 349-369 (FIEFGQISTALYFAYYLIIMP).

It belongs to the cytochrome b family. Fungal cytochrome b-c1 complex contains 10 subunits; 3 respiratory subunits, 2 core proteins and 5 low-molecular weight proteins. Cytochrome b-c1 complex is a homodimer. Heme b serves as cofactor.

Its subcellular location is the mitochondrion inner membrane. Its function is as follows. Component of the ubiquinol-cytochrome c reductase complex (complex III or cytochrome b-c1 complex) that is part of the mitochondrial respiratory chain. The b-c1 complex mediates electron transfer from ubiquinol to cytochrome c. Contributes to the generation of a proton gradient across the mitochondrial membrane that is then used for ATP synthesis. In Akanthomyces muscarius (Entomopathogenic fungus), this protein is Cytochrome b (cob).